The chain runs to 284 residues: MNKQQLKAYFMLMRLHRPIPILLILWPTLTALVLASHGLPDISYLVIFTIGVVVMRTVGCIINDIADVDFDKHVARTNTRPLTSGQLSIKNAIWLCISLTLVAFICVLFLNLYTILLSFVALFLAILYPFCKRFFAIPQLILGLAFNFGIFMAFSTIQNQIPVEAWIFYIATICWTIAYDTIYALADREFDLEIGIKSSAVLFGNKVFRYILLFNFLSLLLLIILGIYCDFNSFFYLGVVICSLFFVRNYFLYKKLGITNCINAFSANHWIGLIIFIIAVIQYI.

The next 9 helical transmembrane spans lie at 19 to 39 (IPILLILWPTLTALVLASHGL), 42 to 62 (ISYLVIFTIGVVVMRTVGCII), 85 to 105 (GQLSIKNAIWLCISLTLVAFI), 107 to 127 (VLFLNLYTILLSFVALFLAIL), 134 to 154 (FFAIPQLILGLAFNFGIFMAF), 165 to 185 (AWIFYIATICWTIAYDTIYAL), 211 to 231 (ILLFNFLSLLLLIILGIYCDF), 233 to 253 (SFFYLGVVICSLFFVRNYFLY), and 261 to 281 (CINAFSANHWIGLIIFIIAVI).

This sequence belongs to the UbiA prenyltransferase family. Requires Mg(2+) as cofactor.

It localises to the cell inner membrane. It carries out the reaction all-trans-octaprenyl diphosphate + 4-hydroxybenzoate = 4-hydroxy-3-(all-trans-octaprenyl)benzoate + diphosphate. Its pathway is cofactor biosynthesis; ubiquinone biosynthesis. In terms of biological role, catalyzes the prenylation of para-hydroxybenzoate (PHB) with an all-trans polyprenyl group. Mediates the second step in the final reaction sequence of ubiquinone-8 (UQ-8) biosynthesis, which is the condensation of the polyisoprenoid side chain with PHB, generating the first membrane-bound Q intermediate 3-octaprenyl-4-hydroxybenzoate. This is 4-hydroxybenzoate octaprenyltransferase from Francisella tularensis subsp. tularensis (strain FSC 198).